A 440-amino-acid chain; its full sequence is Ferreportin (440 aa).

Residues 1–8 (MKVQSLLR) lie on the Cytoplasmic side of the membrane. The chain crosses the membrane as a helical span at residues 9–38 (IETQLLLGRLLTRSGDQAWDFVVPFALLVI). Asp24 contributes to the Ca(2+) binding site. The Extracellular segment spans residues 39 to 42 (FPGK). Residues 43–69 (LQVAAFYYLIVKIGTFLLTPSSGKWID) form a helical membrane-spanning segment. Residues 70-72 (THP) are Cytoplasmic-facing. The chain crosses the membrane as a helical span at residues 73 to 103 (RIQVVKWGVWLQFFAILAGMVFFGMLDGLVR). A Ca(2+)-binding site is contributed by Gln84. Topologically, residues 104–109 (AGGRES) are extracellular. The helical transmembrane segment at 110 to 145 (WLLSVLFIALALSGVMASLGSQITDISVGNDLAPSL) threads the bilayer. Residues 146–147 (VA) lie on the Cytoplasmic side of the membrane. Residues 148–176 (PEKLTHFNSWLRRIDLATEVGAPILAGAL) traverse the membrane as a helical segment. The Extracellular portion of the chain corresponds to 177–186 (FAFHPEQLPL). The chain crosses the membrane as a helical span at residues 187–213 (AGLFLIGLWNLVSFVPEYFLLRNVIQR). Ca(2+) contacts are provided by Asn196 and Glu203. The Cytoplasmic segment spans residues 214-242 (SGLKIKVLTEAQSWKDTFHINLRGSFSDP). A helical membrane pass occupies residues 243–271 (IFWLILSYALLWLSVLSPHGVLLAAYLKD). Topologically, residues 272 to 276 (EMRLP) are extracellular. The chain crosses the membrane as a helical span at residues 277–304 (ETEIGLFRGLGAVFGLISTVSFPYLVRR). Topologically, residues 305 to 306 (LG) are cytoplasmic. The chain crosses the membrane as a helical span at residues 307 to 329 (LISSSRWHLGFQGVTLGIAVTAF). At 330-335 (AMGSTA) the chain is on the extracellular side. Residues 336–365 (SVYVFLGCILLSRVGLYGFSNGEFELRQRL) traverse the membrane as a helical segment. Residues 366-370 (IPEGR) are Cytoplasmic-facing. A helical membrane pass occupies residues 371-395 (RGELNSLSSLTTTSATLILFSAGSL). Topologically, residues 396 to 398 (LPQ) are extracellular. Residues 399 to 424 (TEDFKYLVYVSLAAVLLANVVFIKWS) traverse the membrane as a helical segment. The Cytoplasmic portion of the chain corresponds to 425–440 (SRQGVVTSGAAEPVES).

It belongs to the ferroportin (FP) (TC 2.A.100) family. Ca(2+) serves as cofactor.

The protein resides in the cell membrane. Iron transpoter that exports Fe(2+) from the cell. Also binds to Co(2+) and Ni(2+). May act as a multivalent divalent metal transporter. The transporter is composed of 12 transmembrane (TM) helices organized into N-terminal (TM1-6) and C-terminal (TM7-12) domains. The substrate-binding site is formed at the interface of the two domains and is alternately accessible from either side of the membrane. The transport cycle is viewed as a series of ligand-induced conformational changes that include open outward and open inward states. The chain is Ferreportin (slc39) from Bdellovibrio bacteriovorus (strain ATCC 15356 / DSM 50701 / NCIMB 9529 / HD100).